Here is a 495-residue protein sequence, read N- to C-terminus: UDP-glycosyltransferase 73C9 (495 aa).

23–26 provides a ligand contact to UDP-alpha-D-glucose; that stretch reads GHMI. Residue histidine 24 is the Proton acceptor of the active site. The active-site Charge relay is the aspartate 129. UDP-alpha-D-glucose-binding positions include 355–358, 373–381, and 397–398; these read WSPQ, HCGWNSTLE, and DQ.

This sequence belongs to the UDP-glycosyltransferase family.

Its function is as follows. Possesses very weak glucosyltransferase activity toward 2,4,5-trichlorophenol (TCP), when assayed with high concentrations of TCP. The chain is UDP-glycosyltransferase 73C9 from Barbarea vulgaris (Yellow rocket).